The following is a 313-amino-acid chain: Porphobilinogen deaminase (313 aa).

C242 is subject to S-(dipyrrolylmethanemethyl)cysteine.

The protein belongs to the HMBS family. Monomer. Dipyrromethane is required as a cofactor.

The catalysed reaction is 4 porphobilinogen + H2O = hydroxymethylbilane + 4 NH4(+). The protein operates within porphyrin-containing compound metabolism; protoporphyrin-IX biosynthesis; coproporphyrinogen-III from 5-aminolevulinate: step 2/4. Tetrapolymerization of the monopyrrole PBG into the hydroxymethylbilane pre-uroporphyrinogen in several discrete steps. The protein is Porphobilinogen deaminase of Escherichia coli O17:K52:H18 (strain UMN026 / ExPEC).